The sequence spans 119 residues: Phosphoribosyl-AMP cyclohydrolase (119 aa).

Asp-77 serves as a coordination point for Mg(2+). Cys-78 provides a ligand contact to Zn(2+). Mg(2+) contacts are provided by Asp-79 and Asp-81. 2 residues coordinate Zn(2+): Cys-94 and Cys-101.

Belongs to the PRA-CH family. Homodimer. Mg(2+) is required as a cofactor. Zn(2+) serves as cofactor.

It localises to the cytoplasm. The enzyme catalyses 1-(5-phospho-beta-D-ribosyl)-5'-AMP + H2O = 1-(5-phospho-beta-D-ribosyl)-5-[(5-phospho-beta-D-ribosylamino)methylideneamino]imidazole-4-carboxamide. It participates in amino-acid biosynthesis; L-histidine biosynthesis; L-histidine from 5-phospho-alpha-D-ribose 1-diphosphate: step 3/9. In terms of biological role, catalyzes the hydrolysis of the adenine ring of phosphoribosyl-AMP. The polypeptide is Phosphoribosyl-AMP cyclohydrolase (Cereibacter sphaeroides (strain ATCC 17029 / ATH 2.4.9) (Rhodobacter sphaeroides)).